The chain runs to 372 residues: UDP-N-acetylglucosamine--N-acetylmuramyl-(pentapeptide) pyrophosphoryl-undecaprenol N-acetylglucosamine transferase (372 aa).

UDP-N-acetyl-alpha-D-glucosamine contacts are provided by residues 15–17 (TGG), Asn-126, Arg-169, Ser-197, and Gln-299.

This sequence belongs to the glycosyltransferase 28 family. MurG subfamily.

It is found in the cell inner membrane. The catalysed reaction is di-trans,octa-cis-undecaprenyl diphospho-N-acetyl-alpha-D-muramoyl-L-alanyl-D-glutamyl-meso-2,6-diaminopimeloyl-D-alanyl-D-alanine + UDP-N-acetyl-alpha-D-glucosamine = di-trans,octa-cis-undecaprenyl diphospho-[N-acetyl-alpha-D-glucosaminyl-(1-&gt;4)]-N-acetyl-alpha-D-muramoyl-L-alanyl-D-glutamyl-meso-2,6-diaminopimeloyl-D-alanyl-D-alanine + UDP + H(+). The protein operates within cell wall biogenesis; peptidoglycan biosynthesis. In terms of biological role, cell wall formation. Catalyzes the transfer of a GlcNAc subunit on undecaprenyl-pyrophosphoryl-MurNAc-pentapeptide (lipid intermediate I) to form undecaprenyl-pyrophosphoryl-MurNAc-(pentapeptide)GlcNAc (lipid intermediate II). The protein is UDP-N-acetylglucosamine--N-acetylmuramyl-(pentapeptide) pyrophosphoryl-undecaprenol N-acetylglucosamine transferase of Methylobacterium sp. (strain 4-46).